We begin with the raw amino-acid sequence, 134 residues long: Protein NrdI (134 aa).

Belongs to the NrdI family.

Functionally, probably involved in ribonucleotide reductase function. The chain is Protein NrdI from Rhizobium leguminosarum bv. trifolii (strain WSM2304).